We begin with the raw amino-acid sequence, 299 residues long: MLDKTRLRIAMQKSGRLSDDSRELLARCGIKINLQQQRLIAFAENMPIDILRVRDDDIPGLVMDGVVDLGIIGENVLEEELLNRRAQGEDPRYFTLRRLDFGGCRLSLAMPLDEDYTGPECLQNKRIATSYPHLLKQYLDRKSVSFKSCLLNGSVEVAPRAGLADAICDLVSTGATLEANGLREVEVIYRSKACLIQRDGEMPAEKQQLIDKLLTRMQGVIQARESKYIMLHAPSERLEEVISLLPGAERPTILPLAGDQSRVAMHMVSSETLFWETMEKLKSLGASSILVLPIEKMME.

It belongs to the ATP phosphoribosyltransferase family. Long subfamily. As to quaternary structure, equilibrium between an active dimeric form, an inactive hexameric form and higher aggregates. Interconversion between the various forms is largely reversible and is influenced by the natural substrates and inhibitors of the enzyme. Requires Mg(2+) as cofactor.

Its subcellular location is the cytoplasm. The catalysed reaction is 1-(5-phospho-beta-D-ribosyl)-ATP + diphosphate = 5-phospho-alpha-D-ribose 1-diphosphate + ATP. The protein operates within amino-acid biosynthesis; L-histidine biosynthesis; L-histidine from 5-phospho-alpha-D-ribose 1-diphosphate: step 1/9. With respect to regulation, feedback inhibited by histidine. In terms of biological role, catalyzes the condensation of ATP and 5-phosphoribose 1-diphosphate to form N'-(5'-phosphoribosyl)-ATP (PR-ATP). Has a crucial role in the pathway because the rate of histidine biosynthesis seems to be controlled primarily by regulation of HisG enzymatic activity. This Pectobacterium carotovorum subsp. carotovorum (strain PC1) protein is ATP phosphoribosyltransferase.